Reading from the N-terminus, the 403-residue chain is Ribosomal RNA large subunit methyltransferase I (403 aa).

One can recognise a PUA domain in the interval 9–88; that stretch reads YPRLVLSKGR…ESIDIAFFTR (80 aa).

It belongs to the methyltransferase superfamily. RlmI family.

It localises to the cytoplasm. It catalyses the reaction cytidine(1962) in 23S rRNA + S-adenosyl-L-methionine = 5-methylcytidine(1962) in 23S rRNA + S-adenosyl-L-homocysteine + H(+). Functionally, specifically methylates the cytosine at position 1962 (m5C1962) of 23S rRNA. The protein is Ribosomal RNA large subunit methyltransferase I of Salmonella typhi.